The following is a 334-amino-acid chain: E3 ubiquitin-protein ligase CIP8 (334 aa).

A disordered region spans residues Leu111–Pro158. Acidic residues predominate over residues Ile117–Asp149. Residues Cys257–Arg298 form an RING-type; atypical zinc finger. The disordered stretch occupies residues Glu307–Tyr334. A compositionally biased stretch (low complexity) spans Ser317–Tyr334.

In terms of assembly, interacts with the RING finger of COP1. Interacts with UBC8 through its N-terminal region. In terms of tissue distribution, expressed in both light- and dark-grown seedlings.

The protein resides in the cytoplasm. It carries out the reaction S-ubiquitinyl-[E2 ubiquitin-conjugating enzyme]-L-cysteine + [acceptor protein]-L-lysine = [E2 ubiquitin-conjugating enzyme]-L-cysteine + N(6)-ubiquitinyl-[acceptor protein]-L-lysine.. It functions in the pathway protein modification; protein ubiquitination. Its function is as follows. E3 ubiquitin-protein ligase that mediates ubiquitination and subsequent proteasomal degradation of target proteins. Probably forms a minimal ubiquitin ligase complex in cooperation with the E2 enzyme UBC8. Its interaction with COP1 suggests that it may participate in proteasome-mediated degradation of HY5 in vivo. In Arabidopsis thaliana (Mouse-ear cress), this protein is E3 ubiquitin-protein ligase CIP8 (CIP8).